A 336-amino-acid chain; its full sequence is Fructose-1,6-bisphosphatase class 1 (336 aa).

Residues glutamate 90, aspartate 112, leucine 114, and aspartate 115 each contribute to the Mg(2+) site. Residues 115-118 (DGSS), asparagine 211, and lysine 277 each bind substrate. Residue glutamate 283 coordinates Mg(2+).

The protein belongs to the FBPase class 1 family. As to quaternary structure, homotetramer. Mg(2+) is required as a cofactor.

The protein resides in the cytoplasm. It catalyses the reaction beta-D-fructose 1,6-bisphosphate + H2O = beta-D-fructose 6-phosphate + phosphate. The protein operates within carbohydrate biosynthesis; gluconeogenesis. In Pseudomonas entomophila (strain L48), this protein is Fructose-1,6-bisphosphatase class 1.